The sequence spans 1082 residues: Putative white-brown complex homolog protein 30 (1082 aa).

2 helical membrane passes run 12-32 (HIFL…SLDG) and 292-312 (NIHA…IMVY). Residues 329–348 (SREAAARHAKETTQARERWK) show a composition bias toward basic and acidic residues. The interval 329–437 (SREAAARHAK…QAPKGKQLHT (109 aa)) is disordered. One can recognise an ABC transporter domain in the interval 484-726 (VAFKDLTLTL…FADIGITVPD (243 aa)). 518-525 (GPSGAGKT) is an ATP binding site. An ABC transmembrane type-2 domain is found at 832 to 1029 (RQYRYFVGRV…TLEAFVLSNA (198 aa)). The next 5 membrane-spanning stretches (helical) occupy residues 853-873 (ALDF…AKVN), 877-897 (IDTL…KISA), 958-978 (YIVL…FAIL), 979-999 (YSPS…TLIA), and 1054-1074 (WILC…IAYF).

The protein belongs to the ABC transporter superfamily. ABCG family. Eye pigment precursor importer (TC 3.A.1.204) subfamily.

It is found in the membrane. The sequence is that of Putative white-brown complex homolog protein 30 (WBC30) from Arabidopsis thaliana (Mouse-ear cress).